The following is a 240-amino-acid chain: MKQVRFLPQPARRARAAAARRPGAAALAAAALALAGCAQIPREPITQQPMSAMPPMPPAMQAPGSIYNPGYAGRPLFEDQRPRNVGDILTIVIAENINATKSSGANTNRQGNTSFDVPTAGFLGGLFNKANLSAQGANKFAATGGASAANTFNGTITVTVTNVLPNGNLVVSGEKQMLINQGNEFVRFSGIVNPNTISGQNSVYSTQVADARIEYSAKGYINEAETMGWLQRFFLNIAPW.

A signal peptide spans 1 to 35 (MKQVRFLPQPARRARAAAARRPGAAALAAAALALA).

The protein belongs to the FlgH family. As to quaternary structure, the basal body constitutes a major portion of the flagellar organelle and consists of four rings (L,P,S, and M) mounted on a central rod.

Its subcellular location is the cell outer membrane. It is found in the bacterial flagellum basal body. Assembles around the rod to form the L-ring and probably protects the motor/basal body from shearing forces during rotation. This Burkholderia pseudomallei (strain K96243) protein is Flagellar L-ring protein (flgH).